We begin with the raw amino-acid sequence, 238 residues long: UDP-2,3-diacylglucosamine hydrolase (238 aa).

Residues Asp-8, His-10, Asp-41, Asn-78, and His-113 each coordinate Mn(2+). 78–79 (NR) contributes to the substrate binding site. 5 residues coordinate substrate: Asp-121, Ser-159, Asn-163, Lys-166, and His-194. Positions 194 and 196 each coordinate Mn(2+).

Belongs to the LpxH family. Mn(2+) is required as a cofactor.

The protein localises to the cell inner membrane. It catalyses the reaction UDP-2-N,3-O-bis[(3R)-3-hydroxytetradecanoyl]-alpha-D-glucosamine + H2O = 2-N,3-O-bis[(3R)-3-hydroxytetradecanoyl]-alpha-D-glucosaminyl 1-phosphate + UMP + 2 H(+). It participates in glycolipid biosynthesis; lipid IV(A) biosynthesis; lipid IV(A) from (3R)-3-hydroxytetradecanoyl-[acyl-carrier-protein] and UDP-N-acetyl-alpha-D-glucosamine: step 4/6. Functionally, hydrolyzes the pyrophosphate bond of UDP-2,3-diacylglucosamine to yield 2,3-diacylglucosamine 1-phosphate (lipid X) and UMP by catalyzing the attack of water at the alpha-P atom. Involved in the biosynthesis of lipid A, a phosphorylated glycolipid that anchors the lipopolysaccharide to the outer membrane of the cell. The sequence is that of UDP-2,3-diacylglucosamine hydrolase from Shewanella pealeana (strain ATCC 700345 / ANG-SQ1).